A 573-amino-acid chain; its full sequence is Proline--tRNA ligase (573 aa).

The protein belongs to the class-II aminoacyl-tRNA synthetase family. ProS type 1 subfamily. In terms of assembly, homodimer.

Its subcellular location is the cytoplasm. The enzyme catalyses tRNA(Pro) + L-proline + ATP = L-prolyl-tRNA(Pro) + AMP + diphosphate. Its function is as follows. Catalyzes the attachment of proline to tRNA(Pro) in a two-step reaction: proline is first activated by ATP to form Pro-AMP and then transferred to the acceptor end of tRNA(Pro). As ProRS can inadvertently accommodate and process non-cognate amino acids such as alanine and cysteine, to avoid such errors it has two additional distinct editing activities against alanine. One activity is designated as 'pretransfer' editing and involves the tRNA(Pro)-independent hydrolysis of activated Ala-AMP. The other activity is designated 'posttransfer' editing and involves deacylation of mischarged Ala-tRNA(Pro). The misacylated Cys-tRNA(Pro) is not edited by ProRS. This Elusimicrobium minutum (strain Pei191) protein is Proline--tRNA ligase.